We begin with the raw amino-acid sequence, 299 residues long: Bifunctional protein FolD (299 aa).

NADP(+) is bound by residues 164 to 166 (GRS) and Ile-234.

Belongs to the tetrahydrofolate dehydrogenase/cyclohydrolase family. Homodimer.

It catalyses the reaction (6R)-5,10-methylene-5,6,7,8-tetrahydrofolate + NADP(+) = (6R)-5,10-methenyltetrahydrofolate + NADPH. The enzyme catalyses (6R)-5,10-methenyltetrahydrofolate + H2O = (6R)-10-formyltetrahydrofolate + H(+). Its pathway is one-carbon metabolism; tetrahydrofolate interconversion. Catalyzes the oxidation of 5,10-methylenetetrahydrofolate to 5,10-methenyltetrahydrofolate and then the hydrolysis of 5,10-methenyltetrahydrofolate to 10-formyltetrahydrofolate. This chain is Bifunctional protein FolD, found in Christiangramia forsetii (strain DSM 17595 / CGMCC 1.15422 / KT0803) (Gramella forsetii).